The sequence spans 757 residues: 17S U2 SnRNP complex component HTATSF1 (757 aa).

2 disordered regions span residues 1–54 (MSGN…YEWD) and 80–123 (SDGA…KAES). At serine 2 the chain carries N-acetylserine. The span at 80-94 (SDGASSSTANVQDAN) shows a compositional bias: polar residues. Over residues 97 to 123 (AVEEPPQKEVPETPDSKRKGEKRKAES) the composition is skewed to basic and acidic residues. 2 consecutive RRM domains span residues 134–219 (TNVY…VAKF) and 265–350 (RVVI…AWDG). A U2AF homology motif (UHM) region spans residues 260-354 (RLRHERVVIL…AQAWDGTTDY (95 aa)). N6-acetyllysine is present on lysine 298. A mediates interaction with the P-TEFb complex region spans residues 382 to 757 (GLRRMDSIAG…SSSDDDDDEV (376 aa)). The segment at 383 to 417 (LRRMDSIAGSERPGPSRMRHFSEHPSMSNMKAQEA) is disordered. 4 positions are modified to phosphoserine: serine 388, serine 404, serine 408, and serine 410. Residues 407–417 (PSMSNMKAQEA) are compositionally biased toward polar residues. Residue lysine 431 forms a Glycyl lysine isopeptide (Lys-Gly) (interchain with G-Cter in SUMO2) linkage. The tract at residues 432–757 (FEKAEEGGES…SSSDDDDDEV (326 aa)) is disordered. Phosphoserine is present on residues serine 441, serine 446, serine 519, and serine 528. 2 stretches are compositionally biased toward basic and acidic residues: residues 445 to 483 (ASEK…RALE) and 497 to 538 (GPER…KKES). Positions 539–551 (EDDDSEEESEEDS) are enriched in acidic residues. Basic and acidic residues-rich tracts occupy residues 552–585 (SEKQ…FPED) and 595–609 (TDKS…RVLD). Phosphoserine occurs at positions 556, 560, 578, 598, 604, 613, 621, 645, 679, 705, 724, and 749. 3 stretches are compositionally biased toward acidic residues: residues 610–635 (EEGS…EEEV), 643–671 (DDSD…DNDI), and 678–688 (DSDEKEDEEDT). 2 stretches are compositionally biased toward basic and acidic residues: residues 689–709 (DGKK…NEKL) and 716–737 (PNEK…KEDG). Positions 738–749 (SQSTDSSFALSS) are enriched in low complexity.

This sequence belongs to the HTATSF1 family. As to quaternary structure, component of the 17S U2 SnRNP complex, a ribonucleoprotein complex that contains small nuclear RNA (snRNA) U2 and a number of specific proteins. Within the 17S U2 SnRNP complex, interacts (via UHM region) directly with SF3B1. Component of a complex which is at least composed of HTATSF1/Tat-SF1, the P-TEFb complex components CDK9 and CCNT1, RNA polymerase II, SUPT5H, and NCL/nucleolin. Interacts with GTF2F2/RAP30 and POLR2A. Interacts with TCERG1/CA150. Interacts with (poly-ADP-ribosylated) RPA1; promoting HTATSF1 recruitment to DNA damage sites. Interacts (when phosphorylated) with TOPBP1; promoting recruitment of TOPBP1 to DNA damage sites during S-phase. In terms of processing, phosphorylation at Ser-749 by CK2 during S-phase in response to DNA damage promotes interaction with TOPBP1 and double-strand break (DSB) repair via homologous recombination.

It localises to the nucleus. The protein localises to the chromosome. Functionally, component of the 17S U2 SnRNP complex of the spliceosome, a large ribonucleoprotein complex that removes introns from transcribed pre-mRNAs. The 17S U2 SnRNP complex (1) directly participates in early spliceosome assembly and (2) mediates recognition of the intron branch site during pre-mRNA splicing by promoting the selection of the pre-mRNA branch-site adenosine, the nucleophile for the first step of splicing. Within the 17S U2 SnRNP complex, HTATSF1 is required to stabilize the branchpoint-interacting stem loop. HTATSF1 is displaced from the 17S U2 SnRNP complex before the stable addition of the 17S U2 SnRNP complex to the spliceosome, destabilizing the branchpoint-interacting stem loop and allowing to probe intron branch site sequences. Also acts as a regulator of transcriptional elongation, possibly by mediating the reciprocal stimulatory effect of splicing on transcriptional elongation. Involved in double-strand break (DSB) repair via homologous recombination in S-phase by promoting the recruitment of TOPBP1 to DNA damage sites. Mechanistically, HTATSF1 is (1) recruited to DNA damage sites in S-phase via interaction with poly-ADP-ribosylated RPA1 and (2) phosphorylated by CK2, promoting recruitment of TOPBP1, thereby facilitating RAD51 nucleofilaments formation and RPA displacement, followed by homologous recombination. The sequence is that of 17S U2 SnRNP complex component HTATSF1 (Htatsf1) from Mus musculus (Mouse).